The chain runs to 216 residues: Cytochrome c biogenesis ATP-binding export protein CcmA (216 aa).

The region spanning 2-215 is the ABC transporter domain; sequence LSVEELSCVR…SNHLRKIKLG (214 aa). Residue 34-41 coordinates ATP; the sequence is GHNGAGKT.

This sequence belongs to the ABC transporter superfamily. CcmA exporter (TC 3.A.1.107) family. In terms of assembly, the complex is composed of two ATP-binding proteins (CcmA) and two transmembrane proteins (CcmB).

Its subcellular location is the cell inner membrane. The enzyme catalyses heme b(in) + ATP + H2O = heme b(out) + ADP + phosphate + H(+). In terms of biological role, part of the ABC transporter complex CcmAB involved in the biogenesis of c-type cytochromes; once thought to export heme, this seems not to be the case, but its exact role is uncertain. Responsible for energy coupling to the transport system. This is Cytochrome c biogenesis ATP-binding export protein CcmA from Photobacterium profundum (strain SS9).